A 280-amino-acid chain; its full sequence is Phosphatidylserine decarboxylase proenzyme (280 aa).

Catalysis depends on charge relay system; for autoendoproteolytic cleavage activity residues aspartate 88, histidine 144, and serine 247. Serine 247 acts as the Schiff-base intermediate with substrate; via pyruvic acid; for decarboxylase activity in catalysis. Serine 247 bears the Pyruvic acid (Ser); by autocatalysis mark.

It belongs to the phosphatidylserine decarboxylase family. PSD-B subfamily. Prokaryotic type I sub-subfamily. As to quaternary structure, heterodimer of a large membrane-associated beta subunit and a small pyruvoyl-containing alpha subunit. It depends on pyruvate as a cofactor. In terms of processing, is synthesized initially as an inactive proenzyme. Formation of the active enzyme involves a self-maturation process in which the active site pyruvoyl group is generated from an internal serine residue via an autocatalytic post-translational modification. Two non-identical subunits are generated from the proenzyme in this reaction, and the pyruvate is formed at the N-terminus of the alpha chain, which is derived from the carboxyl end of the proenzyme. The autoendoproteolytic cleavage occurs by a canonical serine protease mechanism, in which the side chain hydroxyl group of the serine supplies its oxygen atom to form the C-terminus of the beta chain, while the remainder of the serine residue undergoes an oxidative deamination to produce ammonia and the pyruvoyl prosthetic group on the alpha chain. During this reaction, the Ser that is part of the protease active site of the proenzyme becomes the pyruvoyl prosthetic group, which constitutes an essential element of the active site of the mature decarboxylase.

It localises to the cell membrane. It catalyses the reaction a 1,2-diacyl-sn-glycero-3-phospho-L-serine + H(+) = a 1,2-diacyl-sn-glycero-3-phosphoethanolamine + CO2. The protein operates within phospholipid metabolism; phosphatidylethanolamine biosynthesis; phosphatidylethanolamine from CDP-diacylglycerol: step 2/2. Catalyzes the formation of phosphatidylethanolamine (PtdEtn) from phosphatidylserine (PtdSer). The sequence is that of Phosphatidylserine decarboxylase proenzyme from Xanthomonas euvesicatoria pv. vesicatoria (strain 85-10) (Xanthomonas campestris pv. vesicatoria).